The following is a 472-amino-acid chain: Collagenase 3 (472 aa).

Positions 1–19 (MHPGVLAAFLFLSWTRCWS) are cleaved as a signal peptide. Residues 20 to 104 (LPVPNDDDDD…PRCGVPDVGE (85 aa)) constitute a propeptide, activation peptide. A Cysteine switch motif is present at residues 95-102 (PRCGVPDV). C97 provides a ligand contact to Zn(2+). The N-linked (GlcNAc...) asparagine glycan is linked to N118. D129 contributes to the Ca(2+) binding site. N-linked (GlcNAc...) asparagine glycosylation is found at N153 and N159. D163 lines the Ca(2+) pocket. Zn(2+) is bound by residues H173 and D175. An interaction with TIMP2 region spans residues 177–247 (YPFDGPSGLL…GALMFPIYTY (71 aa)). Residues D180, G181, S183, and L185 each contribute to the Ca(2+) site. Residue H188 coordinates Zn(2+). N195, G197, and D199 together coordinate Ca(2+). H201 lines the Zn(2+) pocket. D203, D204, and E206 together coordinate Ca(2+). H223 contributes to the Zn(2+) binding site. E224 is a catalytic residue. Residues H227, H233, and M241 each coordinate Zn(2+). Positions 269–472 (PGDEDPNPKH…VMPTNSLLWC (204 aa)) are interaction with collagen. Hemopexin repeat units follow at residues 282–331 (PDKC…WPEL), 332–378 (PNRI…GFPK), 380–428 (VKKI…FPGI), and 429–472 (GDKV…LLWC). Cysteines 285 and 472 form a disulfide. D292, I294, D336, and A338 together coordinate Ca(2+). Position 367 is a phosphotyrosine; by PKDCC (Y367). The Ca(2+) site is built by S384, A386, D433, and V435.

The protein belongs to the peptidase M10A family. It depends on Ca(2+) as a cofactor. Zn(2+) is required as a cofactor. In terms of processing, the proenzyme is activated by removal of the propeptide; this cleavage can be effected by other matrix metalloproteinases, such as MMP2, MMP3 and MMP14 and may involve several cleavage steps. Cleavage can also be autocatalytic, after partial maturation by another protease or after treatment with 4-aminophenylmercuric acetate (APMA) (in vitro). N-glycosylated. Post-translationally, tyrosine phosphorylated by PKDCC/VLK. As to expression, seems to be specific to breast carcinomas.

Its subcellular location is the secreted. It is found in the extracellular space. The protein localises to the extracellular matrix. In terms of biological role, plays a role in the degradation of extracellular matrix proteins including fibrillar collagen, fibronectin, TNC and ACAN. Cleaves triple helical collagens, including type I, type II and type III collagen, but has the highest activity with soluble type II collagen. Can also degrade collagen type IV, type XIV and type X. May also function by activating or degrading key regulatory proteins, such as TGFB1 and CCN2. Plays a role in wound healing, tissue remodeling, cartilage degradation, bone development, bone mineralization and ossification. Required for normal embryonic bone development and ossification. Plays a role in the healing of bone fractures via endochondral ossification. Plays a role in wound healing, probably by a mechanism that involves proteolytic activation of TGFB1 and degradation of CCN2. Plays a role in keratinocyte migration during wound healing. May play a role in cell migration and in tumor cell invasion. The chain is Collagenase 3 (MMP13) from Equus caballus (Horse).